We begin with the raw amino-acid sequence, 859 residues long: DNA mismatch repair protein MutS (859 aa).

617 to 624 (GPNMGGKS) contacts ATP. Residues 799-821 (ETTSLPHEQPRAKPGKPAVPQQS) form a disordered region.

It belongs to the DNA mismatch repair MutS family.

This protein is involved in the repair of mismatches in DNA. It is possible that it carries out the mismatch recognition step. This protein has a weak ATPase activity. In Pseudomonas savastanoi pv. phaseolicola (strain 1448A / Race 6) (Pseudomonas syringae pv. phaseolicola (strain 1448A / Race 6)), this protein is DNA mismatch repair protein MutS.